Reading from the N-terminus, the 211-residue chain is SAGA-associated factor 11 homolog 1 (211 aa).

The SGF11-type zinc-finger motif lies at 115-136 (CTCPNCDRLVAAARFAPHLEKC). The interval 149–211 (RRLATKEGSS…GSKKNNGKTF (63 aa)) is disordered. The span at 157-166 (SSASTSSTST) shows a compositional bias: low complexity. A Phosphoserine modification is found at Ser187. A compositionally biased stretch (low complexity) spans 197-211 (SSRNNGSKKNNGKTF).

This sequence belongs to the SGF11 family. Component of some SAGA transcription coactivator-HAT complexes, at least composed of Ada2b, not/nonstop, Pcaf/Gcn5, Sgf11 and Spt3. Within the SAGA complex, Sgf11, e(y)2, and not/nonstop form an additional subcomplex of SAGA called the DUB module (deubiquitination module). Interacts directly with not/nonstop. Interacts with the AMEX complex component xmas-2. Interacts with Cbp80; important for promoter recruitment of Sgf11 that is not associated with the DUB module.

It localises to the nucleus. The protein localises to the nucleoplasm. The protein resides in the cytoplasm. Functionally, component of the transcription regulatory histone acetylation (HAT) complex SAGA, a multiprotein complex that activates transcription by remodeling chromatin and mediating histone acetylation and deubiquitination. Within the SAGA complex, participates in a subcomplex that specifically deubiquitinates histone H2B. The SAGA complex is recruited to specific gene promoters by activators, where it is required for transcription. Required for nuclear receptor-mediated transactivation. Binds independently on SAGA to promoters in an RNA-dependent manner. Binds to mRNA and is essential for total mRNA export from the nucleus. Required to counteract heterochromatin silencing. Controls the development of neuronal connectivity in visual system by being required for accurate axon targeting in the optic lobe. Required for expression of ecdysone-induced genes such as br/broad. This Drosophila grimshawi (Hawaiian fruit fly) protein is SAGA-associated factor 11 homolog 1.